Consider the following 147-residue polypeptide: Hemoglobin subunit beta (147 aa).

N-acetylvaline is present on valine 2. A Globin domain is found at 3-147; the sequence is NLSGDEKNAV…VANALAHRYH (145 aa). Phosphoserine is present on serine 45. Lysine 60 is subject to N6-acetyllysine. Heme b is bound at residue histidine 64. Lysine 83 is subject to N6-acetyllysine. Histidine 93 contributes to the heme b binding site. Cysteine 94 is modified (S-nitrosocysteine).

It belongs to the globin family. Heterotetramer of two alpha chains and two beta chains. In terms of tissue distribution, red blood cells.

Involved in oxygen transport from the lung to the various peripheral tissues. The protein is Hemoglobin subunit beta (HBB) of Vicugna pacos (Alpaca).